The sequence spans 130 residues: Large-conductance mechanosensitive channel (130 aa).

The Cytoplasmic segment spans residues 1-14 (MWNEFKAFAMRGNI). A helical transmembrane segment spans residues 15 to 43 (VDLAIGVVIGGAFGKIVTSLVNDIIMPLV). Topologically, residues 44–65 (GLLLGGLDFSGLSFTFGDAVVK) are extracellular. The chain crosses the membrane as a helical span at residues 66–85 (YGSFIQTIVNFLIISFSIFI). Over 86-130 (VIRTLNGLRRKKEAEEEAAEEAVDAQEELLKEIRDLLKQQAKSPE) the chain is Cytoplasmic.

This sequence belongs to the MscL family. Homopentamer.

It localises to the cell membrane. Functionally, channel that opens in response to stretch forces in the membrane lipid bilayer. Forms a nonselective ion channel with a conductance of about 4 nanosiemens. May participate in the regulation of osmotic pressure changes within the cell. This chain is Large-conductance mechanosensitive channel, found in Bacillus subtilis (strain 168).